We begin with the raw amino-acid sequence, 204 residues long: MNFLNFSILIFAYLLGSINSAIIVCYIFRLPSPRSVGSGNPGTTNVLRIGGKVLAAITLIFDILKGLVPVVIAKVLTGNDFITACTALYAILGHIFPIFFGFKGGKGVATLIGTLFGFSWILGLIFVITWLCVAIITRYSSLSALVATVIASFSVIFTSDLQVAAPFLIIAIIILVKHKGNIQRLISGQESKIGDKAKAKNDSN.

The next 5 helical transmembrane spans lie at 8–28 (ILIF…CYIF), 53–73 (VLAA…VVIA), 81–101 (FITA…IFFG), 116–136 (FGFS…VAII), and 155–175 (VIFT…IIIL).

This sequence belongs to the PlsY family. Probably interacts with PlsX.

Its subcellular location is the cell inner membrane. The catalysed reaction is an acyl phosphate + sn-glycerol 3-phosphate = a 1-acyl-sn-glycero-3-phosphate + phosphate. It functions in the pathway lipid metabolism; phospholipid metabolism. Catalyzes the transfer of an acyl group from acyl-phosphate (acyl-PO(4)) to glycerol-3-phosphate (G3P) to form lysophosphatidic acid (LPA). This enzyme utilizes acyl-phosphate as fatty acyl donor, but not acyl-CoA or acyl-ACP. This Francisella tularensis subsp. holarctica (strain OSU18) protein is Glycerol-3-phosphate acyltransferase.